Consider the following 529-residue polypeptide: MQQRRPVRRALLSVSDKAGIIEFAQALSARGVELLSTGGTARLLAEKGLAVTEVSDYTGFPEMMDGRVKTLHPKVHGGILGRRGQDDAIMEQHHIAPIDMVVVNLYPFAETVAREGCSLEDAVENIDIGGPTMVRSAAKNHKDVAIVVKSSDYDAIIKEMDANEGSLTLDTRFDLAIKAFEHTAAYDSMIANYFGSMVPAYHGESKEAAGRFPRTLNLNFIKKQDMRYGENSHQQAAFYIEENVKEASVATAQQVQGKALSYNNIADTDAALECVKEFNEPACVIVKHANPCGVAVSTTILDAYDRAYKTDPTSAFGGIIAFNRELDAETAQAIISRQFVEVIIAPSATEDALKITAAKQNVRVLTCGQWAQRVPGLDFKRVNGGLLVQDRDLGMVSEAELRVVSKRQPTEQELRDALFCWKVAKFVKSNAIVYAKENMTIGIGAGQMSRVYSAKIAGIKAADEGLEVKGSAMASDAFFPFRDGIDAAAAVGVSCVIQPGGSIRDDEVIAAADEHGIAMIFTDMRHFRH.

In terms of domain architecture, MGS-like spans 1–148 (MQQRRPVRRA…KNHKDVAIVV (148 aa)).

It belongs to the PurH family.

It catalyses the reaction (6R)-10-formyltetrahydrofolate + 5-amino-1-(5-phospho-beta-D-ribosyl)imidazole-4-carboxamide = 5-formamido-1-(5-phospho-D-ribosyl)imidazole-4-carboxamide + (6S)-5,6,7,8-tetrahydrofolate. The enzyme catalyses IMP + H2O = 5-formamido-1-(5-phospho-D-ribosyl)imidazole-4-carboxamide. It participates in purine metabolism; IMP biosynthesis via de novo pathway; 5-formamido-1-(5-phospho-D-ribosyl)imidazole-4-carboxamide from 5-amino-1-(5-phospho-D-ribosyl)imidazole-4-carboxamide (10-formyl THF route): step 1/1. Its pathway is purine metabolism; IMP biosynthesis via de novo pathway; IMP from 5-formamido-1-(5-phospho-D-ribosyl)imidazole-4-carboxamide: step 1/1. The polypeptide is Bifunctional purine biosynthesis protein PurH (Salmonella dublin (strain CT_02021853)).